The sequence spans 580 residues: Putative Xaa-Pro dipeptidyl-peptidase (580 aa).

Active-site charge relay system residues include Ser207, Asp319, and His350.

It belongs to the peptidase S15 family.

It catalyses the reaction Hydrolyzes Xaa-Pro-|- bonds to release unblocked, N-terminal dipeptides from substrates including Ala-Pro-|-p-nitroanilide and (sequentially) Tyr-Pro-|-Phe-Pro-|-Gly-Pro-|-Ile.. This chain is Putative Xaa-Pro dipeptidyl-peptidase, found in Bacillus cereus (strain ATCC 14579 / DSM 31 / CCUG 7414 / JCM 2152 / NBRC 15305 / NCIMB 9373 / NCTC 2599 / NRRL B-3711).